The chain runs to 546 residues: Tryptophan biosynthesis protein TrpCD (546 aa).

An indole-3-glycerol phosphate synthase region spans residues 1-226 (MMDFGFVDSL…FVQTVCGGEK (226 aa)). The anthranilate phosphoribosyltransferase stretch occupies residues 227–546 (MIEDVLRGLD…EEIACKSTSM (320 aa)). 5-phospho-alpha-D-ribose 1-diphosphate-binding positions include G295, 298–299 (GD), S303, 305–308 (NVST), 322–330 (KHGNRAVSS), and S334. G295 contributes to the anthranilate binding site. Residue S307 coordinates Mg(2+). N325 is an anthranilate binding site. Residue R380 coordinates anthranilate. 2 residues coordinate Mg(2+): D437 and E438.

In the N-terminal section; belongs to the TrpC family. The protein in the C-terminal section; belongs to the anthranilate phosphoribosyltransferase family. Requires Mg(2+) as cofactor.

The enzyme catalyses 1-(2-carboxyphenylamino)-1-deoxy-D-ribulose 5-phosphate + H(+) = (1S,2R)-1-C-(indol-3-yl)glycerol 3-phosphate + CO2 + H2O. It catalyses the reaction N-(5-phospho-beta-D-ribosyl)anthranilate + diphosphate = 5-phospho-alpha-D-ribose 1-diphosphate + anthranilate. Its pathway is amino-acid biosynthesis; L-tryptophan biosynthesis; L-tryptophan from chorismate: step 2/5. It participates in amino-acid biosynthesis; L-tryptophan biosynthesis; L-tryptophan from chorismate: step 4/5. Its function is as follows. Bifunctional enzyme that catalyzes the second and fourth steps of tryptophan biosynthetic pathway. The second step is catalyzed by the anthranilate phosphoribosyltransferase, coded by the TrpD domain and the fourth step is catalyzed by indole-3-glycerol phosphate synthase, coded by the TrpC domain. This Archaeoglobus fulgidus (strain ATCC 49558 / DSM 4304 / JCM 9628 / NBRC 100126 / VC-16) protein is Tryptophan biosynthesis protein TrpCD (trpCD).